Here is a 157-residue protein sequence, read N- to C-terminus: 2-C-methyl-D-erythritol 2,4-cyclodiphosphate synthase (157 aa).

A divalent metal cation is bound by residues aspartate 9 and histidine 11. 4-CDP-2-C-methyl-D-erythritol 2-phosphate contacts are provided by residues 9–11 and 35–36; these read DVH and HS. Residue histidine 43 coordinates a divalent metal cation. 4-CDP-2-C-methyl-D-erythritol 2-phosphate contacts are provided by residues 57–59, phenylalanine 140, and arginine 143; that span reads DIG.

The protein belongs to the IspF family. In terms of assembly, homotrimer. Requires a divalent metal cation as cofactor.

The enzyme catalyses 4-CDP-2-C-methyl-D-erythritol 2-phosphate = 2-C-methyl-D-erythritol 2,4-cyclic diphosphate + CMP. Its pathway is isoprenoid biosynthesis; isopentenyl diphosphate biosynthesis via DXP pathway; isopentenyl diphosphate from 1-deoxy-D-xylulose 5-phosphate: step 4/6. Its function is as follows. Involved in the biosynthesis of isopentenyl diphosphate (IPP) and dimethylallyl diphosphate (DMAPP), two major building blocks of isoprenoid compounds. Catalyzes the conversion of 4-diphosphocytidyl-2-C-methyl-D-erythritol 2-phosphate (CDP-ME2P) to 2-C-methyl-D-erythritol 2,4-cyclodiphosphate (ME-CPP) with a corresponding release of cytidine 5-monophosphate (CMP). The chain is 2-C-methyl-D-erythritol 2,4-cyclodiphosphate synthase from Caldicellulosiruptor bescii (strain ATCC BAA-1888 / DSM 6725 / KCTC 15123 / Z-1320) (Anaerocellum thermophilum).